The primary structure comprises 212 residues: MDPVVLSYMDSLLRQSDVSLLDPPSWLNDHIIGFAFEYFANSQFHDCSDHVSFISPEVTQFIKCTSNPAEIAMFLEPLDLPNKRVVFLAINDNSNQAAGGTHWSLLVYLQDKNSFFHYDSHSRSNSVHAKQVAEKLEAFLGRKGDKLAFVEEKAPAQQNSYDCGMYVICNTEALCQNFFRQQTESLLQLLTPAYITKKRGEWKDLITTLAKK.

Residue methionine 1 is modified to N-acetylmethionine. The segment at serine 11–leucine 174 is protease. Residues histidine 102 and aspartate 119 contribute to the active site. Catalysis depends on cysteine 163, which acts as the Nucleophile.

Belongs to the peptidase C48 family. As to expression, broadly expressed, with highest levels in kidney and pancreas.

Its function is as follows. Protease that catalyzes two essential functions in the NEDD8 pathway: processing of full-length NEDD8 to its mature form and deconjugation of NEDD8 from targeted proteins such as cullins or p53. The protein is Sentrin-specific protease 8 (SENP8) of Homo sapiens (Human).